The following is an 823-amino-acid chain: Protein FAM83G (823 aa).

Alanine 2 bears the N-acetylalanine mark. The tract at residues 2–312 (AFSQVQCLDD…LYLMSHSVSL (311 aa)) is DUF1669. Serine 4 bears the Phosphoserine mark. Residues 75-108 (DPGSEDPRGTGPSQGPEDNGVGDGEEASGADGVP) form a disordered region. Serine 124, serine 127, and serine 356 each carry phosphoserine. The interval 450–823 (RDTSQASAQH…AQAPRDRKDP (374 aa)) is disordered. A compositionally biased stretch (polar residues) spans 452-465 (TSQASAQHQLWKQS). The segment covering 497–508 (DPEPLPPVPKPR) has biased composition (pro residues). The segment covering 529-543 (LPKEEAPQNGTDHRL) has biased composition (basic and acidic residues). A compositionally biased stretch (acidic residues) spans 578-587 (GVEEEDDDDY). Serine 610, serine 614, serine 616, serine 650, and serine 666 each carry phosphoserine. Composition is skewed to basic and acidic residues over residues 672–681 (RGREEADALK) and 809–823 (DSKRRAQAPRDRKDP).

The protein belongs to the FAM83 family. As to quaternary structure, interacts with SMAD1 (via MH2 domain); in a SMAD4-independent manner. Directly interacts (via DUF1669) with casein kinase isoforms CSNK1A1 and CSNK1A1L. Phosphorylated in vitro by CSNK1A1. Post-translationally, BMP signaling induces the phosphorylation by BMPR1A at Ser-610, Ser-614 and Ser-616. Phosphorylation at Ser-610 is necessary for the activation of SMAD4-independent BMP target genes such as NEDD9 and ASNS.

The protein resides in the cytoplasm. The protein localises to the cytosol. Its subcellular location is the nucleus. In terms of biological role, substrate for type I BMP receptor kinase involved in regulation of some target genes of the BMP signaling pathway. Also regulates the expression of several non-BMP target genes, suggesting a role in other signaling pathways. The polypeptide is Protein FAM83G (FAM83G) (Homo sapiens (Human)).